Reading from the N-terminus, the 267-residue chain is B3 domain-containing protein Os02g0455800 (267 aa).

A DNA-binding region (TF-B3) is located at residues 30-131; sequence EKFLMPSDLC…RLFICCRLGT (102 aa). The disordered stretch occupies residues 172 to 221; that stretch reads QARLHDGNQDGGGAPSRHVPSSGRRVEAQLSRVSSRRQRRTMKHSIPEPT. Basic residues predominate over residues 205 to 214; it reads SSRRQRRTMK.

Its subcellular location is the nucleus. The polypeptide is B3 domain-containing protein Os02g0455800 (Oryza sativa subsp. japonica (Rice)).